Here is a 131-residue protein sequence, read N- to C-terminus: Hypocretin neuropeptide precursor (131 aa).

A signal peptide spans 1–33; it reads MNLPSTKVSWAAVTLLLLLLLLPPALLSSGAAA. Residue Q34 is modified to Pyrrolidone carboxylic acid. 2 cysteine pairs are disulfide-bonded: C39–C45 and C40–C47. L66 carries the post-translational modification Leucine amide. At M97 the chain carries Methionine amide. The propeptide at 98-131 is removed in mature form; that stretch reads GRRAGAEPAPRPCLGRRCSAPAAASVAPGGQSGI.

Belongs to the orexin family. In terms of processing, specific enzymatic cleavages at paired basic residues yield the different active peptides. In terms of tissue distribution, abundantly expressed in subthalamic nucleus but undetectable in other brain regions tested (hypothalamus was not tested) and in heart, placenta, lung, liver, skeletal muscle, kidney and pancreas.

The protein localises to the rough endoplasmic reticulum. It is found in the cytoplasmic vesicle. The protein resides in the synapse. Neuropeptides that play a significant role in the regulation of food intake and sleep-wakefulness, possibly by coordinating the complex behavioral and physiologic responses of these complementary homeostatic functions. A broader role in the homeostatic regulation of energy metabolism, autonomic function, hormonal balance and the regulation of body fluids, is also suggested. In terms of biological role, binds to orexin receptors HCRTR1/OX1R and HCRTR2/OX2R with a high affinity. Stimulates food intake. Modulates pituitary luteinizing hormone secretion in an ovarian steroid-dependent manner. Functionally, binds to orexin receptor HCRTR2/OX2R only. Stimulates food intake. Modulates pituitary luteinizing hormone secretion in an ovarian steroid-dependent manner. The polypeptide is Hypocretin neuropeptide precursor (Homo sapiens (Human)).